The primary structure comprises 387 residues: Exodeoxyribonuclease 7 large subunit (387 aa).

The protein belongs to the XseA family. Heterooligomer composed of large and small subunits.

Its subcellular location is the cytoplasm. The catalysed reaction is Exonucleolytic cleavage in either 5'- to 3'- or 3'- to 5'-direction to yield nucleoside 5'-phosphates.. Its function is as follows. Bidirectionally degrades single-stranded DNA into large acid-insoluble oligonucleotides, which are then degraded further into small acid-soluble oligonucleotides. This is Exodeoxyribonuclease 7 large subunit from Campylobacter jejuni subsp. jejuni serotype O:23/36 (strain 81-176).